The chain runs to 157 residues: Short-type peptidyl-prolyl cis-trans isomerase (157 aa).

Residues 1–95 form the PPIase FKBP-type domain; the sequence is MINLIKKGDY…RDERLIQEIP (95 aa). The segment at 86–137 is IF; the sequence is RDERLIQEIPKEMFADADFEPQEGMLILASGIPAKIIKVTDDTVTLDFNHEL.

It belongs to the FKBP-type PPIase family.

The protein localises to the cytoplasm. The enzyme catalyses [protein]-peptidylproline (omega=180) = [protein]-peptidylproline (omega=0). Its function is as follows. Catalyzes the cis-trans isomerization of peptidyl prolyl bonds and accelerates protein folding. Also exhibits chaperone-like activity. This is Short-type peptidyl-prolyl cis-trans isomerase from Methanocaldococcus jannaschii (strain ATCC 43067 / DSM 2661 / JAL-1 / JCM 10045 / NBRC 100440) (Methanococcus jannaschii).